A 61-amino-acid polypeptide reads, in one-letter code: MPIVNVKLLEGRSDEQLKNLVSEVTDAVEKTTGANRQAIHVVIEEMKPNHYGVAGVRKSDQ.

The active-site Proton acceptor; via imino nitrogen is P2.

The protein belongs to the 4-oxalocrotonate tautomerase family.

The polypeptide is Probable tautomerase SAV1363 (Staphylococcus aureus (strain Mu50 / ATCC 700699)).